The sequence spans 226 residues: ATP synthase F(0) complex subunit a (226 aa).

A run of 6 helical transmembrane segments spans residues Pro12–Pro32, Trp68–Leu88, Gln97–Phe117, Ile138–Val158, Ile164–Ile184, and Thr200–Leu222.

The protein belongs to the ATPase A chain family. As to quaternary structure, component of the ATP synthase complex composed at least of ATP5F1A/subunit alpha, ATP5F1B/subunit beta, ATP5MC1/subunit c (homooctomer), MT-ATP6/subunit a, MT-ATP8/subunit 8, ATP5ME/subunit e, ATP5MF/subunit f, ATP5MG/subunit g, ATP5MK/subunit k, ATP5MJ/subunit j, ATP5F1C/subunit gamma, ATP5F1D/subunit delta, ATP5F1E/subunit epsilon, ATP5PF/subunit F6, ATP5PB/subunit b, ATP5PD/subunit d, ATP5PO/subunit OSCP. ATP synthase complex consists of a soluble F(1) head domain (subunits alpha(3) and beta(3)) - the catalytic core - and a membrane F(0) domain - the membrane proton channel (subunits c, a, 8, e, f, g, k and j). These two domains are linked by a central stalk (subunits gamma, delta, and epsilon) rotating inside the F1 region and a stationary peripheral stalk (subunits F6, b, d, and OSCP). Interacts with DNAJC30; interaction is direct.

Its subcellular location is the mitochondrion inner membrane. The catalysed reaction is H(+)(in) = H(+)(out). Subunit a, of the mitochondrial membrane ATP synthase complex (F(1)F(0) ATP synthase or Complex V) that produces ATP from ADP in the presence of a proton gradient across the membrane which is generated by electron transport complexes of the respiratory chain. ATP synthase complex consist of a soluble F(1) head domain - the catalytic core - and a membrane F(1) domain - the membrane proton channel. These two domains are linked by a central stalk rotating inside the F(1) region and a stationary peripheral stalk. During catalysis, ATP synthesis in the catalytic domain of F(1) is coupled via a rotary mechanism of the central stalk subunits to proton translocation. With the subunit c (ATP5MC1), forms the proton-conducting channel in the F(0) domain, that contains two crucial half-channels (inlet and outlet) that facilitate proton movement from the mitochondrial intermembrane space (IMS) into the matrix. Protons are taken up via the inlet half-channel and released through the outlet half-channel, following a Grotthuss mechanism. This chain is ATP synthase F(0) complex subunit a, found in Hylobates lar (Lar gibbon).